The sequence spans 534 residues: Bifunctional pantoate ligase/cytidylate kinase (534 aa).

The tract at residues 1 to 302 (MRLLTTVAAL…LGSTRLIDNT (302 aa)) is pantoate--beta-alanine ligase. 48 to 55 (MGSLHQGH) is an ATP binding site. The active-site Proton donor is the H55. Q79 contacts (R)-pantoate. Residue Q79 coordinates beta-alanine. 172-175 (GQKD) lines the ATP pocket. A (R)-pantoate-binding site is contributed by Q178. Residues V201 and 209 to 212 (CSSR) contribute to the ATP site. The segment at 303-534 (ILRDRQPIIA…DYYQQRLSQW (232 aa)) is cytidylate kinase.

It in the N-terminal section; belongs to the pantothenate synthetase family. In the C-terminal section; belongs to the cytidylate kinase family. Type 1 subfamily.

It localises to the cytoplasm. It carries out the reaction (R)-pantoate + beta-alanine + ATP = (R)-pantothenate + AMP + diphosphate + H(+). The catalysed reaction is CMP + ATP = CDP + ADP. It catalyses the reaction dCMP + ATP = dCDP + ADP. It participates in cofactor biosynthesis; (R)-pantothenate biosynthesis; (R)-pantothenate from (R)-pantoate and beta-alanine: step 1/1. Catalyzes the condensation of pantoate with beta-alanine in an ATP-dependent reaction via a pantoyl-adenylate intermediate. Functionally, catalyzes the transfer of a phosphate group from ATP to either CMP or dCMP to form CDP or dCDP and ADP, respectively. The chain is Bifunctional pantoate ligase/cytidylate kinase from Nostoc sp. (strain PCC 7120 / SAG 25.82 / UTEX 2576).